The following is a 412-amino-acid chain: ATP phosphoribosyltransferase regulatory subunit (412 aa).

It belongs to the class-II aminoacyl-tRNA synthetase family. HisZ subfamily. Heteromultimer composed of HisG and HisZ subunits.

The protein resides in the cytoplasm. Its pathway is amino-acid biosynthesis; L-histidine biosynthesis; L-histidine from 5-phospho-alpha-D-ribose 1-diphosphate: step 1/9. Its function is as follows. Required for the first step of histidine biosynthesis. May allow the feedback regulation of ATP phosphoribosyltransferase activity by histidine. The sequence is that of ATP phosphoribosyltransferase regulatory subunit from Dehalococcoides mccartyi (strain ATCC BAA-2100 / JCM 16839 / KCTC 5957 / BAV1).